A 297-amino-acid polypeptide reads, in one-letter code: Thiosulfate sulfurtransferase (297 aa).

Residue lysine 14 is modified to N6-acetyllysine; alternate. The residue at position 14 (lysine 14) is an N6-succinyllysine; alternate. The Rhodanese 1 domain occupies 25–143 (LGPSLRVLDA…WLKEGHPVTS (119 aa)). Residue serine 35 is glycosylated (O-linked (GlcNAc) serine). Serine 38 carries the phosphoserine modification. N6-acetyllysine; alternate is present on lysine 136. N6-succinyllysine; alternate is present on lysine 136. Residues 144–159 (EPSRPEPAVFKATLNL) are hinge. Lysine 163 is modified (N6-acetyllysine). The Rhodanese 2 domain occupies 173 to 288 (QSKRFQLVDS…WFRRAPPETR (116 aa)). N6-acetyllysine; alternate is present on lysine 175. Lysine 175 carries the post-translational modification N6-succinyllysine; alternate. Arginine 187 contributes to the substrate binding site. N6-acetyllysine; alternate is present on residues lysine 219 and lysine 224. An N6-succinyllysine; alternate mark is found at lysine 219 and lysine 224. N6-acetyllysine is present on lysine 236. N6-acetyllysine; alternate is present on lysine 237. An N6-succinyllysine; alternate modification is found at lysine 237. Cysteine 248 serves as the catalytic Cysteine persulfide intermediate. Position 250 (lysine 250) interacts with substrate.

Monomer. As to expression, expressed in numerous tissues.

Its subcellular location is the mitochondrion matrix. It catalyses the reaction thiosulfate + hydrogen cyanide = thiocyanate + sulfite + 2 H(+). Its function is as follows. Together with MRPL18, acts as a mitochondrial import factor for the cytosolic 5S rRNA. Only the nascent unfolded cytoplasmic form is able to bind to the 5S rRNA. Formation of iron-sulfur complexes and cyanide detoxification. This chain is Thiosulfate sulfurtransferase (Tst), found in Mus musculus (Mouse).